The primary structure comprises 343 residues: Selenide, water dikinase (343 aa).

Cys-15 is an active-site residue. Residues Lys-18 and His-46–Asp-48 contribute to the ATP site. Asp-49 is a binding site for Mg(2+). Residues Asp-66, Asp-89, and Gly-137–Ser-139 each bind ATP. Residue Asp-89 coordinates Mg(2+). Asp-225 lines the Mg(2+) pocket.

The protein belongs to the selenophosphate synthase 1 family. Class I subfamily. In terms of assembly, homodimer. Requires Mg(2+) as cofactor.

It catalyses the reaction hydrogenselenide + ATP + H2O = selenophosphate + AMP + phosphate + 2 H(+). Functionally, synthesizes selenophosphate from selenide and ATP. The protein is Selenide, water dikinase of Sulfurimonas denitrificans (strain ATCC 33889 / DSM 1251) (Thiomicrospira denitrificans (strain ATCC 33889 / DSM 1251)).